Reading from the N-terminus, the 218-residue chain is 25.3 kDa vesicle transport protein SEC22-1 (218 aa).

Topologically, residues 1-192 are cytoplasmic; that stretch reads MVKMTLIARV…DKAKDLNRQA (192 aa). A Longin domain is found at 6 to 120; the sequence is LIARVTDGLP…YAFIKFDTFI (115 aa). Positions 135-195 constitute a v-SNARE coiled-coil homology domain; that stretch reads NIAKLNDELY…KDLNRQALIR (61 aa). A helical; Anchor for type IV membrane protein membrane pass occupies residues 193–213; that stretch reads LIRKWAPVAIVFGVVFLLFWV. Residues 214–218 lie on the Vesicular side of the membrane; the sequence is KNKLW.

Belongs to the synaptobrevin family. Interacts with SEC24A. In terms of tissue distribution, mainly expressed in flowers and siliques, to a lower extent in seedlings, and barely in roots and leaves.

It is found in the golgi apparatus membrane. It localises to the endoplasmic reticulum membrane. Its function is as follows. V-SNARE involved in vesicle trafficking from the ER to the Golgi complex and required for early secretion. Involved in endoplasmic reticulum (ER) biogenesis and functions as well as for Golgi-stack integrity. Essential for gametophytes development. Involved in cesium Cs(+) accumulation, a non-essential cation. This Arabidopsis thaliana (Mouse-ear cress) protein is 25.3 kDa vesicle transport protein SEC22-1.